The chain runs to 291 residues: MEEGTGEYTKRVVVHALEDILHQELRVLDKGFVRVVDYMGSDESVVQAARVSYGRGTKRTSQDAALIGYLMRHAHTSPFEMCEIKLHVKLPIFVARQWVRHRTASINEYSARYSVLDREFYIPDEKQIAEQSTNNAQGRGTPLPADAAKRIMELFRRNSELMYEDYEALLEQGLARELARMNLTINCYTQWYWKVNLHNLLRFLALRSGAGAQYEIREYASRILEIVRLWVPMVHAAFVEYHLESSTISRSALVVVRKMLQGEKVSMEESGLGRREWGELMSVLYPDGEPE.

Residues G31 to Y241 form the ThyX domain. FAD is bound by residues S77, R100 to R102, and E108. Residues Q97–R100, E108–R112, and R180 each bind dUMP. The ThyX motif motif lies at R100–S110. Position 196–198 (N196–H198) interacts with FAD. Residue R207 coordinates dUMP. Catalysis depends on R207, which acts as the Involved in ionization of N3 of dUMP, leading to its activation.

This sequence belongs to the thymidylate synthase ThyX family. As to quaternary structure, homotetramer. FAD serves as cofactor.

It catalyses the reaction dUMP + (6R)-5,10-methylene-5,6,7,8-tetrahydrofolate + NADPH + H(+) = dTMP + (6S)-5,6,7,8-tetrahydrofolate + NADP(+). It participates in pyrimidine metabolism; dTTP biosynthesis. Functionally, catalyzes the reductive methylation of 2'-deoxyuridine-5'-monophosphate (dUMP) to 2'-deoxythymidine-5'-monophosphate (dTMP) while utilizing 5,10-methylenetetrahydrofolate (mTHF) as the methyl donor, and NADPH and FADH(2) as the reductant. This chain is Flavin-dependent thymidylate synthase, found in Anaplasma marginale (strain St. Maries).